Consider the following 115-residue polypeptide: Large ribosomal subunit protein bL20 (115 aa).

The protein belongs to the bacterial ribosomal protein bL20 family.

Its function is as follows. Binds directly to 23S ribosomal RNA and is necessary for the in vitro assembly process of the 50S ribosomal subunit. It is not involved in the protein synthesizing functions of that subunit. In Synechococcus sp. (strain WH7803), this protein is Large ribosomal subunit protein bL20.